Here is a 221-residue protein sequence, read N- to C-terminus: uncharacterized protein (221 aa).

Positions 1–26 (MVRLVPRAFAATVALLAAGFSPATAS) are cleaved as a signal peptide.

This is an uncharacterized protein from Mycobacterium tuberculosis (strain CDC 1551 / Oshkosh).